Here is a 505-residue protein sequence, read N- to C-terminus: Sucrose porin (505 aa).

A signal peptide spans 1–22 (MYRKSTLAMLIALLTSAASAHA). The disordered stretch occupies residues 44–87 (ENRAQTAENRAGAAEKKVQQLTAQQQKNQNSTQEVAQRTARLEK). Over residues 62 to 72 (QQLTAQQQKNQ) the composition is skewed to low complexity.

Belongs to the porin LamB (TC 1.B.3) family. As to quaternary structure, homotrimer.

The protein localises to the cell outer membrane. Its function is as follows. Porin for sucrose uptake. In Salmonella typhimurium, this protein is Sucrose porin (scrY).